Consider the following 426-residue polypeptide: tRNA (guanine(37)-N(1))-methyltransferase (426 aa).

S-adenosyl-L-methionine-binding positions include His203, 242–243, 269–270, and Asn292; these read DL and DA. Positions 374–426 are disordered; it reads RISFKMPTLKKRKDTENNDDQENNNNSSNNNNNNKIDYNEAVSSGGEGKKIKH. Positions 396–407 are enriched in low complexity; the sequence is NNNNSSNNNNNN.

Belongs to the class I-like SAM-binding methyltransferase superfamily. TRM5/TYW2 family. In terms of assembly, monomer.

The protein resides in the mitochondrion matrix. It localises to the nucleus. It is found in the cytoplasm. It carries out the reaction guanosine(37) in tRNA + S-adenosyl-L-methionine = N(1)-methylguanosine(37) in tRNA + S-adenosyl-L-homocysteine + H(+). In terms of biological role, specifically methylates the N1 position of guanosine-37 in various cytoplasmic and mitochondrial tRNAs. Methylation is not dependent on the nature of the nucleoside 5' of the target nucleoside. This is the first step in the biosynthesis of wybutosine (yW), a modified base adjacent to the anticodon of tRNAs and required for accurate decoding. In Heterostelium pallidum (strain ATCC 26659 / Pp 5 / PN500) (Cellular slime mold), this protein is tRNA (guanine(37)-N(1))-methyltransferase (trmt5).